The following is a 185-amino-acid chain: Protein GrpE (185 aa).

Positions 1–22 are disordered; it reads MTASQEPVDQAPESNEPAPAVP.

The protein belongs to the GrpE family. As to quaternary structure, homodimer.

It localises to the cytoplasm. Its function is as follows. Participates actively in the response to hyperosmotic and heat shock by preventing the aggregation of stress-denatured proteins, in association with DnaK and GrpE. It is the nucleotide exchange factor for DnaK and may function as a thermosensor. Unfolded proteins bind initially to DnaJ; upon interaction with the DnaJ-bound protein, DnaK hydrolyzes its bound ATP, resulting in the formation of a stable complex. GrpE releases ADP from DnaK; ATP binding to DnaK triggers the release of the substrate protein, thus completing the reaction cycle. Several rounds of ATP-dependent interactions between DnaJ, DnaK and GrpE are required for fully efficient folding. The polypeptide is Protein GrpE (Bordetella petrii (strain ATCC BAA-461 / DSM 12804 / CCUG 43448)).